A 336-amino-acid polypeptide reads, in one-letter code: Formimidoylglutamase (336 aa).

Histidine 129, aspartate 160, histidine 162, aspartate 164, aspartate 257, and aspartate 259 together coordinate Mn(2+).

This sequence belongs to the arginase family. The cofactor is Mn(2+).

The catalysed reaction is N-formimidoyl-L-glutamate + H2O = formamide + L-glutamate. It functions in the pathway amino-acid degradation; L-histidine degradation into L-glutamate; L-glutamate from N-formimidoyl-L-glutamate (hydrolase route): step 1/1. Functionally, catalyzes the conversion of N-formimidoyl-L-glutamate to L-glutamate and formamide. In Vibrio vulnificus (strain CMCP6), this protein is Formimidoylglutamase.